A 372-amino-acid chain; its full sequence is Oxidoreductase ptaL (372 aa).

The first 16 residues, 1–16 (MKHIVIIGGGFAGVST), serve as a signal peptide directing secretion. 6-hydroxy-FAD-binding positions include 8–12 (GGGFA) and Arg-51. The N-linked (GlcNAc...) asparagine glycan is linked to Asn-251. Asp-285 contacts 6-hydroxy-FAD.

Belongs to the FAD-dependent oxidoreductase family. It depends on 6-hydroxy-FAD as a cofactor.

It participates in secondary metabolite biosynthesis. Oxidoreductase; part of the gene cluster that mediates the biosynthesis of pestheic acid, a diphenyl ether which is a biosynthetic precursor of the unique chloropupukeananes. The biosynthesis initiates from condensation of acetate and malonate units catalyzed by the non-reducing PKS ptaA. As the ptaA protein is TE/CLC domain-deficient, hydrolysis and Claisen cyclization of the polyketide could be catalyzed by ptaB containing a beta-lactamase domain. The ptaB protein might hydrolyze the thioester bond between the ACP of ptaA and the intermediate to release atrochrysone carboxylic acid, which is spontaneously dehydrated to form endocrocin anthrone. Endocrocin anthrone is then converted to endocrocin, catalyzed by the anthrone oxygenase ptaC. Spontaneous decarboxylation of endocrocin occurs to generate emodin. An O-methyltransferase (ptaH or ptaI) could methylate emodin to form physcion. PtaJ could then catalyze the oxidative cleavage of physcion, and rotation of the intermediate could then afford desmethylisosulochrin. PtaF, a putative NADH-dependent oxidoreductase, might also participate in the oxidative cleavage step. Desmethylisosulochrin is then transformed by another O-methyltransferase (ptaH or ptaI) to form isosulochrin. Chlorination of isosulochrin by ptaM in the cyclohexadienone B ring then produces chloroisosulochrin. PtaE is responsible for the oxidative coupling reactions of both benzophenones isosulochrin and chloroisosulochrin to RES-1214-1 and pestheic acid respectively, regardless of chlorination. This is Oxidoreductase ptaL from Pestalotiopsis fici (strain W106-1 / CGMCC3.15140).